Reading from the N-terminus, the 529-residue chain is RE1-silencing transcription factor B (529 aa).

The segment at 156–178 (FRCKPCQYKAESEEEFVHHIKIH) adopts a C2H2-type 1 zinc-finger fold. Residues 188–210 (SNKKAQGNEADSSISEESDVSKG) form a disordered region. C2H2-type zinc fingers lie at residues 212–234 (IQCDRCGYNTNRFDHYLAHLKHH), 244–266 (YKCTICTYTTVSEYHWKKHLRNH), 272–294 (YTCSQCSYFSDRKNNYIQHIRTH), 300–322 (YQCILCPYSSSQKTHLTRHMRTH), 328–351 (FKCEQCSYVASNQHEVTRHARQVH), 357–379 (LTCPHCDYKTADRSNFKKHVELH), and 385–408 (FLCPVCDYAASKKCNLQYHIKSRH). A disordered region spans residues 484 to 529 (LSSTQKKIKTSDARPEKILDKSRKSSCVKRKSDLLENSNDTQTSTV). A compositionally biased stretch (basic and acidic residues) spans 492–506 (KTSDARPEKILDKSR). Residues 518–529 (LENSNDTQTSTV) are compositionally biased toward polar residues.

Its subcellular location is the nucleus. The protein resides in the cytoplasm. In terms of biological role, transcriptional repressor which binds neuron-restrictive silencer element (NRSE) and represses neuronal gene transcription in non-neuronal cells. Plays a role in the early development of the nervous system and is required for proper patterning of the neuroectoderm during gastrulation. This involves the correct speciation of the neuroepithelial domain and adequate development of the non-neural ectoderm. This Xenopus laevis (African clawed frog) protein is RE1-silencing transcription factor B (rest-b).